Consider the following 110-residue polypeptide: UPF0060 membrane protein RSp1275 (110 aa).

4 helical membrane-spanning segments follow: residues 8–28, 33–53, 63–83, and 90–110; these read FLFA…WLVL, SAWL…LLTL, AAYG…VDGA, and IGGA…PQPT.

It belongs to the UPF0060 family.

The protein localises to the cell inner membrane. The polypeptide is UPF0060 membrane protein RSp1275 (Ralstonia nicotianae (strain ATCC BAA-1114 / GMI1000) (Ralstonia solanacearum)).